Consider the following 571-residue polypeptide: Folylpolyglutamate synthase (571 aa).

ATP is bound at residue 122–125 (GKGS). Mg(2+) is bound by residues serine 146, glutamate 215, and histidine 243. ATP-binding residues include arginine 363 and aspartate 385.

It belongs to the folylpolyglutamate synthase family. A monovalent cation serves as cofactor. Expressed in both shoots and roots, but expression in roots is higher compared with shoots. Distinct expression in the quiescent center (QC) region of the root tip. Also expressed in vascular tissues of the cotyledons and hypocotyls, and the first true leaves of 7 days old seedlings.

The protein resides in the plastid. It is found in the chloroplast. The catalysed reaction is (6S)-5,6,7,8-tetrahydrofolyl-(gamma-L-Glu)(n) + L-glutamate + ATP = (6S)-5,6,7,8-tetrahydrofolyl-(gamma-L-Glu)(n+1) + ADP + phosphate + H(+). The protein operates within cofactor biosynthesis; tetrahydrofolylpolyglutamate biosynthesis. Functionally, catalyzes conversion of folates to polyglutamate derivatives allowing concentration of folate compounds in the cell and the intracellular retention of these cofactors, which are important substrates for most of the folate-dependent enzymes that are involved in one-carbon transfer reactions involved in purine, pyrimidine and amino acid synthesis. Essential for organellar and whole-plant folate homeostasis. Required for postembryonic root development. Generates polyglutamylated folate cofactors to support C1 metabolism required for meristem maintenance and cell expansion during postembryonic root development. The polypeptide is Folylpolyglutamate synthase (Arabidopsis thaliana (Mouse-ear cress)).